Consider the following 45-residue polypeptide: uncharacterized protein (45 aa).

This is an uncharacterized protein from Dictyostelium discoideum (Social amoeba).